A 306-amino-acid polypeptide reads, in one-letter code: Mitochondrial brown fat uncoupling protein 1 (306 aa).

Residues 1 to 10 (MVGTTATDVA) are Mitochondrial intermembrane-facing. A helical membrane pass occupies residues 11-32 (PTMGVKIFSAGVAACLADVITF). Solcar repeat units lie at residues 11–102 (PTMG…VQEF), 110–200 (PSLR…MKGA), and 209–294 (DDVP…LKRE). Residues 33-73 (PLDTAKVRLQIQGECQTTSGIRYKGVLGTITTLAKTEGPLK) are Mitochondrial matrix-facing. A fatty acid 16:0-binding site is contributed by K56. A helical transmembrane segment spans residues 74-96 (LYSGLPAGLQRQISFASLRIGLY). Over 97–115 (DTVQEFWGGEEATPSLRSK) the chain is Mitochondrial intermembrane. Residues 116–132 (ICAGLTTGGVAVFIGQP) form a helical membrane-spanning segment. The Mitochondrial matrix portion of the chain corresponds to 133-177 (TEVVKVRLQAQSHLHGLKPRYTGTYNAYRIIATTESLSTLWKGTT). The chain crosses the membrane as a helical span at residues 178-194 (PNLLRNIIINCTELVTY). Topologically, residues 195-211 (DLMKGALVRNDILADDV) are mitochondrial intermembrane. Residues 212 to 231 (PCHLLSALIAGFCTTLLSSP) traverse the membrane as a helical segment. Topologically, residues 232 to 265 (VDVVKTRFINSPQGQYTSVPSCAMSMLTKEGPTA) are mitochondrial matrix. C253 carries the cysteine sulfenic acid (-SOH) modification. A helical transmembrane segment spans residues 266–288 (FFKGFAPSFLRLASWNVIMFVCF). K268 lines the fatty acid 16:0 pocket. At 289-306 (EKLKRELMKSRQTVDCAT) the chain is on the mitochondrial intermembrane side.

It belongs to the mitochondrial carrier (TC 2.A.29) family. Most probably functions as a monomer. Binds one purine nucleotide per monomer. However, has also been suggested to function as a homodimer or a homotetramer. Tightly associates with cardiolipin in the mitochondrion inner membrane; may stabilize and regulate its activity. In terms of processing, may undergo sulfenylation upon cold exposure. May increase the sensitivity of UCP1 thermogenic function to the activation by noradrenaline probably through structural effects. Post-translationally, may undergo ubiquitin-mediated proteasomal degradation.

The protein resides in the mitochondrion inner membrane. It carries out the reaction H(+)(in) = H(+)(out). With respect to regulation, has no constitutive proton transporter activity and has to be activated by long-chain fatty acids/LCFAs. Inhibited by purine nucleotides. Both purine nucleotides and LCFAs bind the cytosolic side of the transporter and directly compete to activate or inhibit it. Activated by noradrenaline and reactive oxygen species. Despite lacking canonical translational encoding for selenocysteine, a small pool of the protein has been observed to selectively incorporate selenocysteine at 'Cys-253'. Selenocysteine-modified protein is highly sensitive to redox modification and may constitute a pool of protein highly sensitive to activation by elevated levels of reactive oxygen species (ROS). Functionally, mitochondrial protein responsible for thermogenic respiration, a specialized capacity of brown adipose tissue and beige fat that participates in non-shivering adaptive thermogenesis to temperature and diet variations and more generally to the regulation of energy balance. Functions as a long-chain fatty acid/LCFA and proton symporter, simultaneously transporting one LCFA and one proton through the inner mitochondrial membrane. However, LCFAs remaining associated with the transporter via their hydrophobic tails, it results in an apparent transport of protons activated by LCFAs. Thereby, dissipates the mitochondrial proton gradient and converts the energy of substrate oxydation into heat instead of ATP. Regulates the production of reactive oxygen species/ROS by mitochondria. The sequence is that of Mitochondrial brown fat uncoupling protein 1 from Ochotona dauurica (Daurian pika).